Here is a 176-residue protein sequence, read N- to C-terminus: MSKVKKNEDTLSEVLVDVNRVTKVVKGGRRFAFSAYVVVGDKAGRVGAGHGKAKEVNEARGKAKQAAKKRMMKVPLYQNRTIHHDVVGKSGAAKVILRRAKAGTGVIAGGSMRAIFDSLGVHDIVAKSIGSTNVYAMISATFDALNKLASPKSIAMRRDKKVNEISIKSSDIQVNE.

The S5 DRBM domain occupies 11 to 74 (LSEVLVDVNR…QAAKKRMMKV (64 aa)).

It belongs to the universal ribosomal protein uS5 family. Part of the 30S ribosomal subunit. Contacts proteins S4 and S8.

Functionally, with S4 and S12 plays an important role in translational accuracy. Its function is as follows. Located at the back of the 30S subunit body where it stabilizes the conformation of the head with respect to the body. In Rickettsia akari (strain Hartford), this protein is Small ribosomal subunit protein uS5.